We begin with the raw amino-acid sequence, 759 residues long: Cullin-4A (759 aa).

The interval 1–40 is disordered; it reads MADEGPRKGSVSALMGRTNGLTKPAALAGGPAKPGGTGGS. K8 participates in a covalent cross-link: Glycyl lysine isopeptide (Lys-Gly) (interchain with G-Cter in SUMO2). S10 carries the post-translational modification Phosphoserine. The segment covering 20–31 has biased composition (low complexity); that stretch reads GLTKPAALAGGP. K33 is covalently cross-linked (Glycyl lysine isopeptide (Lys-Gly) (interchain with G-Cter in ubiquitin)). A Cullin neddylation domain is found at 691 to 750; that stretch reads DRQYQIDAAIVRIMKMRKTLGHNLLVSELYNQLKFPVKPGDLKKRIESLIDRDYMERDKD. K705 is covalently cross-linked (Glycyl lysine isopeptide (Lys-Gly) (interchain with G-Cter in NEDD8)).

Belongs to the cullin family. Can self-associate. Component of multiple DCX (DDB1-CUL4-X-box) E3 ubiquitin-protein ligase complexes that seem to consist of DDB1, CUL4A or CUL4B, RBX1 and a variable substrate recognition component which seems to belong to a protein family described as DCAF (Ddb1- and Cul4-associated factor) or CDW (CUL4-DDB1-associated WD40-repeat) proteins. Component of the CSA complex (DCX(ERCC8) complex) containing ERCC8, RBX1, DDB1 and CUL4A; the CSA complex interacts with RNA polymerase II; upon UV irradiation it interacts with the COP9 signalosome and preferentially with the hyperphosphorylated form of RNA polymerase II. Component of the DCX(DET1-COP1) complex with the substrate recognition component DET1 and COP1. Component of the DCX(DDB2) complex with the substrate recognition component DDB2. Component of the DCX(DTL) complex with the putative substrate recognition component DTL. Component of DCX complexes part of the DesCEND (destruction via C-end degrons) pathway, which contain either TRPC4AP or DCAF12 as substrate-recognition component. Component of the DCX(AMBRA1) complex with the substrate recognition component AMBRA1. Interacts with DDB1, RBX1, RNF7, CDT1, TIP120A/CAND1, SKP2, CDKN1B, MDM2, TP53 and HOXA9. Interacts with DDB2; the interactions with DDB2 and CAND1 are mutually exclusive. Interacts with DCAF1, DTL, DDA1, DCAF6, DCAF4, DCAF16, DCAF17, DET1, WDTC1, DCAF5, DCAF11, WDR24A, COP1, PAFAH1B1, ERCC8, GRWD1, FBXW5, RBBP7, GNB2, WSB1, WSB2, NUP43, PWP1, FBXW8, ATG16L1, KATNB1, RBBP4, RBBP5, LRWD1 and DCAF8. May interact with WDR26, WDR51B, SNRNP40, WDR61, WDR76, WDR5. Interacts (when neddylated) with ARIH1; leading to activate the E3 ligase activity of ARIH1. The DDB1-CUL4A complex interacts with CRY1. Interacts (unneddylated form) with DCUN1D1, DCUN1D2, DCUN1D3, DCUN1D4 and DCUN1D5; these interactions promote the cullin neddylation. In terms of assembly, (Microbial infection) Interacts with murine cytomegalovirus M48. Neddylated; required for activity of cullin-RING-based E3 ubiquitin-protein ligase complexes. Deneddylated via its interaction with the COP9 signalosome (CSN) complex. Post-translationally, (Microbial infection) Deneddylated by murine cytomegalovirus M48 leading to a S-phase-like environment that is required for efficient replication of the viral genome. As to expression, expressed in oocytes (at protein level). In the ovary, also expressed in cumulus cells. Expressed in testis, spleen and kidney.

It participates in protein modification; protein ubiquitination. Its function is as follows. Core component of multiple cullin-RING-based E3 ubiquitin-protein ligase complexes which mediate the ubiquitination of target proteins. As a scaffold protein may contribute to catalysis through positioning of the substrate and the ubiquitin-conjugating enzyme. The E3 ubiquitin-protein ligase activity of the complex is dependent on the neddylation of the cullin subunit and is inhibited by the association of the deneddylated cullin subunit with TIP120A/CAND1. The functional specificity of the E3 ubiquitin-protein ligase complex depends on the variable substrate recognition component. DCX(DET1-COP1) directs ubiquitination of JUN. DCX(DDB2) directs ubiquitination of XPC. DCX(DDB2) ubiquitinates histones H3-H4 and is required for efficient histone deposition during replication-coupled (H3.1) and replication-independent (H3.3) nucleosome assembly, probably by facilitating the transfer of H3 from ASF1A/ASF1B to other chaperones involved in histone deposition. DCX(DTL) plays a role in PCNA-dependent polyubiquitination of CDT1 and MDM2-dependent ubiquitination of p53/TP53 in response to radiation-induced DNA damage and during DNA replication. DCX(DTL) directs autoubiquitination of DTL. In association with DDB1 and SKP2 probably is involved in ubiquitination of CDKN1B/p27kip. Is involved in ubiquitination of HOXA9. The DDB1-CUL4A-DTL E3 ligase complex regulates the circadian clock function by mediating the ubiquitination and degradation of CRY1. The DCX(ERCC8) complex (also named CSA complex) plays a role in transcription-coupled repair (TCR). A number of DCX complexes (containing either TRPC4AP or DCAF12 as substrate-recognition component) are part of the DesCEND (destruction via C-end degrons) pathway, which recognizes a C-degron located at the extreme C terminus of target proteins, leading to their ubiquitination and degradation. With CUL4B, contributes to ribosome biogenesis. The DCX(AMBRA1) complex is a master regulator of the transition from G1 to S cell phase by mediating ubiquitination of phosphorylated cyclin-D (CCND1, CCND2 and CCND3). The DCX(AMBRA1) complex also acts as a regulator of Cul5-RING (CRL5) E3 ubiquitin-protein ligase complexes by mediating ubiquitination and degradation of Elongin-C (ELOC) component of CRL5 complexes. This is Cullin-4A from Mus musculus (Mouse).